Consider the following 307-residue polypeptide: Serine/threonine-protein phosphatase 4 catalytic subunit (307 aa).

The Mn(2+) site is built by Asp54, His56, Asp82, and Asn114. His115 serves as the catalytic Proton donor. His164 and His238 together coordinate Mn(2+). The residue at position 307 (Leu307) is a Leucine methyl ester.

It belongs to the PPP phosphatase family. PP-4 (PP-X) subfamily. In terms of assembly, serine/threonine-protein phosphatase 4 (PP4) occurs in different assemblies of the catalytic and one or more regulatory subunits. Mn(2+) serves as cofactor.

It is found in the cytoplasm. The protein localises to the nucleus. Its subcellular location is the cytoskeleton. The protein resides in the microtubule organizing center. It localises to the centrosome. The catalysed reaction is O-phospho-L-seryl-[protein] + H2O = L-seryl-[protein] + phosphate. The enzyme catalyses O-phospho-L-threonyl-[protein] + H2O = L-threonyl-[protein] + phosphate. In terms of biological role, protein phosphatase that regulates many processes such as microtubule organization at centrosomes. In Xenopus laevis (African clawed frog), this protein is Serine/threonine-protein phosphatase 4 catalytic subunit (ppp4c).